We begin with the raw amino-acid sequence, 483 residues long: Glutamate--tRNA ligase (483 aa).

The 'HIGH' region motif lies at 9–19 (PSPTGNLHIGT). The short motif at 250-254 (KLSKR) is the 'KMSKS' region element. ATP is bound at residue Lys-253.

Belongs to the class-I aminoacyl-tRNA synthetase family. Glutamate--tRNA ligase type 1 subfamily. Monomer.

The protein localises to the cytoplasm. The enzyme catalyses tRNA(Glu) + L-glutamate + ATP = L-glutamyl-tRNA(Glu) + AMP + diphosphate. Its function is as follows. Catalyzes the attachment of glutamate to tRNA(Glu) in a two-step reaction: glutamate is first activated by ATP to form Glu-AMP and then transferred to the acceptor end of tRNA(Glu). The protein is Glutamate--tRNA ligase of Synechocystis sp. (strain ATCC 27184 / PCC 6803 / Kazusa).